A 331-amino-acid chain; its full sequence is MINTSIPLVDLHRHLDGNVRVNTIWELGHQHGIALPADSLETLAPFVQIQGKETSLVAFLKKLDWMVAVLADLDAVKRIAYENVADAALSGLDYAELRFSPYYMAMNHKLPIEGVVEAVIDGVKAGLKDYQVNINLIGIMSRSFGQPACTQELEGLLAHKQHLVAMDLAGDELGFPGELFNEHFKRVRDAGLAITAHAGEAAGSQSMWQAIQELGATRIGHGVNAIHDPKLMEYLAKHRIGIESCPTSNLHTSTVSSYAEHPFRTFMDAGVLIGLNTDDPGVSAIDIKHEYRIAKFELGLSDAELAQVQRNGVEMAFLSESERKALYAAKA.

Histidine 12 and histidine 14 together coordinate Zn(2+). 3 residues coordinate substrate: histidine 14, aspartate 16, and glycine 170. Position 197 (histidine 197) interacts with Zn(2+). Glutamate 200 functions as the Proton donor in the catalytic mechanism. Residue aspartate 278 coordinates Zn(2+). Position 279 (aspartate 279) interacts with substrate.

Belongs to the metallo-dependent hydrolases superfamily. Adenosine and AMP deaminases family. Adenosine deaminase subfamily. Requires Zn(2+) as cofactor.

The catalysed reaction is adenosine + H2O + H(+) = inosine + NH4(+). It carries out the reaction 2'-deoxyadenosine + H2O + H(+) = 2'-deoxyinosine + NH4(+). Functionally, catalyzes the hydrolytic deamination of adenosine and 2-deoxyadenosine. This Shewanella oneidensis (strain ATCC 700550 / JCM 31522 / CIP 106686 / LMG 19005 / NCIMB 14063 / MR-1) protein is Adenosine deaminase.